The following is a 59-amino-acid chain: U-reduvitoxin-Pr6a (59 aa).

Positions 1 to 19 are cleaved as a signal peptide; it reads MKVFLLTILLCFLIAYCAG. 3 disulfide bridges follow: Cys31/Cys46, Cys38/Cys51, and Cys45/Cys58.

Belongs to the venom Ptu1-like knottin family. In terms of tissue distribution, expressed by the venom gland.

It is found in the secreted. Binds reversibly and blocks P/Q-type voltage-gated calcium channels (Cav). The protein is U-reduvitoxin-Pr6a of Platymeris rhadamanthus (Red spot assassin bug).